The following is a 342-amino-acid chain: Nucleoid-associated protein Sfri_2491 (342 aa).

The protein belongs to the YejK family.

It is found in the cytoplasm. The protein localises to the nucleoid. This chain is Nucleoid-associated protein Sfri_2491, found in Shewanella frigidimarina (strain NCIMB 400).